We begin with the raw amino-acid sequence, 35 residues long: UPF0387 membrane protein YohO (35 aa).

A helical membrane pass occupies residues 6–26 (IGVIALFLFMALGGIGGVMLA).

This sequence belongs to the UPF0387 family.

It is found in the cell inner membrane. The chain is UPF0387 membrane protein YohO from Shigella boydii serotype 4 (strain Sb227).